We begin with the raw amino-acid sequence, 231 residues long: Transmembrane protein 225 (231 aa).

Over 1 to 13 (MVHILVRKVEATN) the chain is Cytoplasmic. A helical transmembrane segment spans residues 14–34 (MFFSSWTLVFLAVGIIIEEWA). Residues 35–67 (ELKLGPQKPTITHSPWICCTPLWPSDGLEVIRN) lie on the Extracellular side of the membrane. Residues 68–88 (ILIVVLSLSFMHNLLLGFEFT) traverse the membrane as a helical segment. Over 89–97 (YMIPQTKYT) the chain is Cytoplasmic. A helical transmembrane segment spans residues 98-118 (LIMTACLAFLTGILLLGALLL). Residues 119-135 (YHHMLRQGESVYYSSYK) are Extracellular-facing. The chain crosses the membrane as a helical span at residues 136-156 (ISWIIFTAYLNVLFLFISGFL). Residues 157-231 (SLLQYKQPID…IQARRVTWAL (75 aa)) are Cytoplasmic-facing. Residues 225 to 229 (RRVTW) carry the RVxF motif.

As to quaternary structure, interacts (via RVxF motif) with PPP1CC.

Its subcellular location is the cytoplasmic vesicle. The protein localises to the secretory vesicle. The protein resides in the acrosome membrane. Functionally, probably inhibits protein phosphatase 1 (PP1) in sperm via binding to catalytic subunit PPP1CC. In Bos taurus (Bovine), this protein is Transmembrane protein 225 (TMEM225).